The sequence spans 706 residues: Sodium- and chloride-dependent glycine transporter 1 (706 aa).

Residues 1-26 (MSGGDTRAAIARPRMAAAHGPVAPSS) are disordered. Over 1–108 (MSGGDTRAAI…KRGNWGNQIE (108 aa)) the chain is Cytoplasmic. Residues 7–18 (RAAIARPRMAAA) show a composition bias toward low complexity. Transmembrane regions (helical) follow at residues 109 to 129 (FVLTSVGYAVGLGNVWRFPYL), 136 to 156 (GAFMFPYFIMLIFCGIPLFFM), and 188 to 208 (VSTYIGIYYNVVICIAFYYFF). The Extracellular portion of the chain corresponds to 209-285 (SSMTHVLPWA…LSDDIGNFGE (77 aa)). A run of 9 helical transmembrane segments spans residues 286–306 (VRLPLLGCLGVSWLVVFLCLI), 315–335 (VVYFTATFPYVVLTILFVRGV), 360–380 (VWGDAASQIFYSLGCAWGGLI), 407–427 (SVYAGFVIFSILGFMANHLGV), 450–470 (LLPISPLWSLLFFFMLILLGL), 506–526 (VAGFLLGIPLTSQAGIYWLLL), 530–550 (YAASFSLVVISCIMCVAIMYI), 570–590 (LFFQICWRFVSPAIIFFILVF), and 610–630 (VAIGFLMALSSVLCIPLYAMF). Over 631–706 (RLCRTDGDTL…GSSRLQDSRI (76 aa)) the chain is Cytoplasmic. Phosphoserine occurs at positions 673 and 698. Positions 695-706 (SNGSSRLQDSRI) are essential for interaction with EXOC1.

Belongs to the sodium:neurotransmitter symporter (SNF) (TC 2.A.22) family. SLC6A9 subfamily. In terms of assembly, interacts with EXOC1; interaction increases the transporter capacity of SLC6A9 probably by promoting its insertion into the cell membrane. Interacts with EXOC3 and EXOC4. Expressed in the brain, kidney, pancreas, lung, placenta and liver. As to expression, expressed only in the brain.

The protein localises to the cell membrane. It carries out the reaction glycine(out) + chloride(out) + 2 Na(+)(out) = glycine(in) + chloride(in) + 2 Na(+)(in). Inhibited by sarcosine. Functionally, sodium- and chloride-dependent glycine transporter. Essential for regulating glycine concentrations at inhibitory glycinergic synapses. In terms of biological role, sodium- and chloride-dependent glycine transporter. This Homo sapiens (Human) protein is Sodium- and chloride-dependent glycine transporter 1 (SLC6A9).